The primary structure comprises 256 residues: Spheroidene monooxygenase (256 aa).

Positions 1-23 (MTNELSNAAGASQQGPAASSFSA) are enriched in low complexity. The segment at 1 to 26 (MTNELSNAAGASQQGPAASSFSADTP) is disordered.

This sequence belongs to the CrtA family. Requires heme as cofactor.

The enzyme catalyses spheroidene + 4 reduced [2Fe-2S]-[ferredoxin] + 2 O2 + 4 H(+) = spheroiden-2-one + 4 oxidized [2Fe-2S]-[ferredoxin] + 3 H2O. The catalysed reaction is spirilloxanthin + 4 reduced [2Fe-2S]-[ferredoxin] + 2 O2 + 4 H(+) = 2-oxospirilloxanthin + 4 oxidized [2Fe-2S]-[ferredoxin] + 3 H2O. It carries out the reaction 2-oxospirilloxanthin + 4 reduced [2Fe-2S]-[ferredoxin] + 2 O2 + 4 H(+) = 2,2'-dioxospirilloxanthin + 4 oxidized [2Fe-2S]-[ferredoxin] + 3 H2O. It catalyses the reaction spheroidene + 2 reduced [2Fe-2S]-[ferredoxin] + O2 + 2 H(+) = 2-hydroxyspheroidene + 2 oxidized [2Fe-2S]-[ferredoxin] + H2O. The enzyme catalyses 2-hydroxyspheroidene + 2 reduced [2Fe-2S]-[ferredoxin] + O2 + 2 H(+) = 2,2-dihydroxyspheroidene + 2 oxidized [2Fe-2S]-[ferredoxin] + H2O. The catalysed reaction is 2,2-dihydroxyspheroidene = spheroiden-2-one + H2O. It carries out the reaction spirilloxanthin + 2 reduced [2Fe-2S]-[ferredoxin] + O2 + 2 H(+) = 2-hydroxyspirilloxanthin + 2 oxidized [2Fe-2S]-[ferredoxin] + H2O. It catalyses the reaction 2-hydroxyspirilloxanthin + 2 reduced [2Fe-2S]-[ferredoxin] + O2 + 2 H(+) = 2,2-dihydroxyspirilloxanthin + 2 oxidized [2Fe-2S]-[ferredoxin] + H2O. The enzyme catalyses 2,2-dihydroxyspirilloxanthin = 2-oxospirilloxanthin + H2O. The catalysed reaction is 2-oxospirilloxanthin + 2 reduced [2Fe-2S]-[ferredoxin] + O2 + 2 H(+) = 2'-hydroxy-2-oxospirilloxanthin + 2 oxidized [2Fe-2S]-[ferredoxin] + H2O. It carries out the reaction 2'-hydroxy-2-oxospirilloxanthin + 2 reduced [2Fe-2S]-[ferredoxin] + O2 + 2 H(+) = 2',2'-dihydroxy-2-oxospirilloxanthin + 2 oxidized [2Fe-2S]-[ferredoxin] + H2O. It catalyses the reaction 2',2'-dihydroxy-2-oxospirilloxanthin = 2,2'-dioxospirilloxanthin + H2O. It participates in carotenoid biosynthesis; spheroidene biosynthesis. It functions in the pathway carotenoid biosynthesis; spirilloxanthin biosynthesis. Functionally, involved in the biosynthesis of the carotenoids spheroidene and spirilloxanthin. Catalyzes the introduction of one keto group at the C-2 position of spheroidene and two keto groups at the C-2 and C-2' positions of spirilloxanthin. This Rubrivivax gelatinosus (Rhodocyclus gelatinosus) protein is Spheroidene monooxygenase.